The chain runs to 94 residues: Large ribosomal subunit protein bL25 (94 aa).

Belongs to the bacterial ribosomal protein bL25 family. Part of the 50S ribosomal subunit; part of the 5S rRNA/L5/L18/L25 subcomplex. Contacts the 5S rRNA. Binds to the 5S rRNA independently of L5 and L18.

This is one of the proteins that binds to the 5S RNA in the ribosome where it forms part of the central protuberance. This chain is Large ribosomal subunit protein bL25, found in Shigella boydii serotype 18 (strain CDC 3083-94 / BS512).